A 98-amino-acid polypeptide reads, in one-letter code: NADH-ubiquinone oxidoreductase chain 4L (98 aa).

Transmembrane regions (helical) follow at residues 1–21 (MSSI…GLLM), 29–49 (SLLC…VTML), and 61–81 (VMLM…LVTV).

It belongs to the complex I subunit 4L family. In terms of assembly, core subunit of respiratory chain NADH dehydrogenase (Complex I) which is composed of 45 different subunits.

It is found in the mitochondrion inner membrane. It carries out the reaction a ubiquinone + NADH + 5 H(+)(in) = a ubiquinol + NAD(+) + 4 H(+)(out). Core subunit of the mitochondrial membrane respiratory chain NADH dehydrogenase (Complex I) which catalyzes electron transfer from NADH through the respiratory chain, using ubiquinone as an electron acceptor. Part of the enzyme membrane arm which is embedded in the lipid bilayer and involved in proton translocation. In Tamandua tetradactyla (Southern anteater), this protein is NADH-ubiquinone oxidoreductase chain 4L (MT-ND4L).